The primary structure comprises 911 residues: Protein translocase subunit SecA (911 aa).

ATP-binding positions include Gln87, 105–109, and Asp499; that span reads GEGKT. Zn(2+) is bound by residues Cys895, Cys897, Cys906, and His907.

It belongs to the SecA family. Monomer and homodimer. Part of the essential Sec protein translocation apparatus which comprises SecA, SecYEG and auxiliary proteins SecDF-YajC and YidC. Requires Zn(2+) as cofactor.

The protein resides in the cell inner membrane. The protein localises to the cytoplasm. The enzyme catalyses ATP + H2O + cellular proteinSide 1 = ADP + phosphate + cellular proteinSide 2.. Functionally, part of the Sec protein translocase complex. Interacts with the SecYEG preprotein conducting channel. Has a central role in coupling the hydrolysis of ATP to the transfer of proteins into and across the cell membrane, serving both as a receptor for the preprotein-SecB complex and as an ATP-driven molecular motor driving the stepwise translocation of polypeptide chains across the membrane. The polypeptide is Protein translocase subunit SecA (Novosphingobium aromaticivorans (strain ATCC 700278 / DSM 12444 / CCUG 56034 / CIP 105152 / NBRC 16084 / F199)).